The primary structure comprises 846 residues: Pseudolaratriene synthase, chloroplastic (846 aa).

The N-terminal 58 residues, 1-58 (MSRFTSATHGLNLSIKMPISVSQVPSIRSNTSKYELQKLRSTGRSVLQTRRQLAIINM), are a transit peptide targeting the chloroplast. Mg(2+) contacts are provided by D595, D599, and D747. A DDXXD motif motif is present at residues 595–599 (DDIYD).

This sequence belongs to the terpene synthase family. Mg(2+) is required as a cofactor. As to expression, expressed in young and mature roots. Expressed at low levels in barks.

The protein localises to the plastid. Its subcellular location is the chloroplast. The catalysed reaction is (2E,6E,10E)-geranylgeranyl diphosphate = pseudolaratriene + diphosphate. It functions in the pathway terpene metabolism. Converts geranylgeranyl diphosphate to an new 5,7-fused bicyclic diterpene, named pseudolaratriene. Catalyzes the first committed step in pseudolaric acid B (PAB) biosynthesis. PAB exhibits antiproliferative activity by inhibiting microtubule polymerization, and has demonstrated antitumor properties against several cancer types. The protein is Pseudolaratriene synthase, chloroplastic of Pseudolarix amabilis (Golden larch).